Consider the following 378-residue polypeptide: MSHLDNGFRSLTLQRFPATDDVNPLQAWEAADEYLLQQLDDTEIRGPVLILNDAFGALSCALAEHKPYSIGDSYISELATRENLRLNGIDESSVKFLDSTADYPQQPGVVLIKVPKTLALLEQQLRALRKVVTSDTRIIAGAKARDIHTSTLELFEKVLGPTTTTLAWKKARLINCTFNEPPLADAPQTVSWKLEGTDWTIHNHANVFSRTGLDIGARFFMQHLPENLEGEIVDLGCGNGVIGLTLLDKNPQAKVVFVDESPMAVASSRLNVETNMPEALDRCEFMINNALSGVEPFRFNAVLCNPPFHQQHALTDNVAWEMFHHARRCLKINGELYIVANRHLDYFHKLKKIFGNCTTIATNNKFVVLKAVKLGRRR.

The protein belongs to the methyltransferase superfamily. RlmG family.

The protein resides in the cytoplasm. The enzyme catalyses guanosine(1835) in 23S rRNA + S-adenosyl-L-methionine = N(2)-methylguanosine(1835) in 23S rRNA + S-adenosyl-L-homocysteine + H(+). Specifically methylates the guanine in position 1835 (m2G1835) of 23S rRNA. The polypeptide is Ribosomal RNA large subunit methyltransferase G (Shigella dysenteriae serotype 1 (strain Sd197)).